We begin with the raw amino-acid sequence, 358 residues long: Alanine racemase (358 aa).

Lys35 serves as the catalytic Proton acceptor; specific for D-alanine. Lys35 bears the N6-(pyridoxal phosphate)lysine mark. Substrate is bound at residue Arg130. The Proton acceptor; specific for L-alanine role is filled by Tyr255. A substrate-binding site is contributed by Met303.

This sequence belongs to the alanine racemase family. Requires pyridoxal 5'-phosphate as cofactor.

The catalysed reaction is L-alanine = D-alanine. It functions in the pathway amino-acid biosynthesis; D-alanine biosynthesis; D-alanine from L-alanine: step 1/1. Catalyzes the interconversion of L-alanine and D-alanine. May also act on other amino acids. This chain is Alanine racemase (alr), found in Shewanella loihica (strain ATCC BAA-1088 / PV-4).